The sequence spans 285 residues: Probable endonuclease 4 (285 aa).

Residues His69, His109, Glu145, Asp179, His182, His216, Asp229, His231, and Glu261 each contribute to the Zn(2+) site.

This sequence belongs to the AP endonuclease 2 family. The cofactor is Zn(2+).

It carries out the reaction Endonucleolytic cleavage to 5'-phosphooligonucleotide end-products.. Functionally, endonuclease IV plays a role in DNA repair. It cleaves phosphodiester bonds at apurinic or apyrimidinic (AP) sites, generating a 3'-hydroxyl group and a 5'-terminal sugar phosphate. The chain is Probable endonuclease 4 from Salmonella typhi.